Here is a 238-residue protein sequence, read N- to C-terminus: Opacity protein opA68 (238 aa).

Ala1 is a signal peptide. Residues 88–109 form a disordered region; that stretch reads NLQRRTSNGNRRDRKTENQENG.

The protein belongs to the opacity porin family.

It is found in the cell outer membrane. In terms of biological role, implicated in a number of adherence functions. OPA proteins are implicated in pathogenesis and are subject to phase variation. This chain is Opacity protein opA68, found in Neisseria gonorrhoeae.